The primary structure comprises 666 residues: Threonine--tRNA ligase (666 aa).

Residues 7–70 form the TGS domain; the sequence is QQVTLTVTLP…TADCTAEIIT (64 aa). Residues 253–555 form a catalytic region; it reads DHRKLGTELE…LIEHTAGNFP (303 aa). Zn(2+) contacts are provided by Cys351, His402, and His532.

This sequence belongs to the class-II aminoacyl-tRNA synthetase family. Homodimer. The cofactor is Zn(2+).

It is found in the cytoplasm. The catalysed reaction is tRNA(Thr) + L-threonine + ATP = L-threonyl-tRNA(Thr) + AMP + diphosphate + H(+). Catalyzes the attachment of threonine to tRNA(Thr) in a two-step reaction: L-threonine is first activated by ATP to form Thr-AMP and then transferred to the acceptor end of tRNA(Thr). Also edits incorrectly charged L-seryl-tRNA(Thr). This is Threonine--tRNA ligase from Chlorobium phaeovibrioides (strain DSM 265 / 1930) (Prosthecochloris vibrioformis (strain DSM 265)).